A 309-amino-acid chain; its full sequence is Myristoylated alanine-rich C-kinase substrate (309 aa).

Residues Met-1 to Glu-309 are disordered. Gly-2 carries N-myristoyl glycine lipidation. Phosphothreonine is present on Thr-15. Ser-26, Ser-27, Ser-29, Ser-46, Ser-63, and Ser-74 each carry phosphoserine. The segment covering Ser-26 to Glu-35 has biased composition (polar residues). Composition is skewed to low complexity over residues Ala-73–Ala-82, Ala-89–Ala-98, and Ala-109–Glu-142. At Thr-79 the chain carries Phosphothreonine. Phosphoserine; by MAPK is present on Ser-113. 5 positions are modified to phosphoserine: Ser-122, Ser-128, Ser-138, Ser-140, and Ser-141. The residue at position 143 (Thr-143) is a Phosphothreonine. The segment covering Lys-145 to Phe-157 has biased composition (basic residues). The calmodulin-binding (PSD) stretch occupies residues Lys-145 to Lys-169. A phosphoserine; by PKC mark is found at Ser-152 and Ser-156. Ser-160 bears the Phosphoserine mark. Ser-163 is modified (phosphoserine; by PKC). Lys-165 is subject to N6-acetyllysine. A Phosphoserine modification is found at Ser-171. The span at Ala-190–Glu-203 shows a compositional bias: low complexity. Residues Gln-204 to Gly-215 are compositionally biased toward gly residues. The residue at position 246 (Ser-246) is a Phosphoserine. Residues Pro-256–Ala-290 show a composition bias toward low complexity. At Ser-291 the chain carries Phosphoserine. Over residues Ser-291–Glu-309 the composition is skewed to pro residues.

It belongs to the MARCKS family. As to quaternary structure, interacts with CDC42. Interacts with GTP-bound form of RAB10. Interacts with calmodulin/CALM1. Acetylated at Lys-165 by KAT5; acetylation is required for its subsequent phosphorylation. Deacetylated by SIRT2. In terms of processing, phosphorylation by PKC displaces MARCKS from the membrane. It also inhibits the F-actin cross-linking activity. PKC-mediated phosphorylation increases 4 to 5-fold upon TNF-alpha or LPS induction. Post-translationally, myristoylated. A proper myristoylation is essential for the proper distribution to the plasma membrane. Phosphorylation by PKC displaces MARCKS from the membrane. It also inhibits the F-actin cross-linking activity. In terms of tissue distribution, brain, spleen, less in kidney and heart, and very low levels in liver.

The protein resides in the cell membrane. The protein localises to the cytoplasm. Its subcellular location is the cytoskeleton. Membrane-associated protein that plays a role in the structural modulation of the actin cytoskeleton, chemotaxis, motility, cell adhesion, phagocytosis, and exocytosis through lipid sequestering and/or protein docking to membranes. Thus, exerts an influence on a plethora of physiological processes, such as embryonic development, tissue regeneration, neuronal plasticity, and inflammation. Sequesters phosphatidylinositol 4,5-bisphosphate (PIP2) at lipid rafts in the plasma membrane of quiescent cells, an action reversed by protein kinase C, ultimately inhibiting exocytosis. During inflammation, promotes the migration of inflammatory cells and the secretion of cytokines such as tumor necrosis factor (TNF), particularly in macrophages. Plays an essential role in bacteria-induced intracellular reactive oxygen species (ROS) formation in the monocytic cell type. Participates in the regulation of neurite initiation and outgrowth by interacting with components of cellular machinery including CDC42 that regulates cell shape and process extension through modulation of the cytoskeleton. Also plays a role in axon development by mediating docking and fusion of RAB10-positive vesicles with the plasma membrane. The protein is Myristoylated alanine-rich C-kinase substrate (Marcks) of Mus musculus (Mouse).